A 244-amino-acid chain; its full sequence is 5'-nucleotidase SurE (244 aa).

Asp8, Asp9, Ser39, and Asn96 together coordinate a divalent metal cation.

This sequence belongs to the SurE nucleotidase family. It depends on a divalent metal cation as a cofactor.

The protein resides in the cytoplasm. The enzyme catalyses a ribonucleoside 5'-phosphate + H2O = a ribonucleoside + phosphate. Functionally, nucleotidase that shows phosphatase activity on nucleoside 5'-monophosphates. The sequence is that of 5'-nucleotidase SurE from Thermus thermophilus (strain ATCC 27634 / DSM 579 / HB8).